Reading from the N-terminus, the 78-residue chain is Acyl carrier protein (78 aa).

Residues 2–77 form the Carrier domain; it reads SDIEQRVKKI…QAIDYVNANL (76 aa). Residue S37 is modified to O-(pantetheine 4'-phosphoryl)serine.

The protein belongs to the acyl carrier protein (ACP) family. In terms of processing, 4'-phosphopantetheine is transferred from CoA to a specific serine of apo-ACP by AcpS. This modification is essential for activity because fatty acids are bound in thioester linkage to the sulfhydryl of the prosthetic group.

It localises to the cytoplasm. The protein operates within lipid metabolism; fatty acid biosynthesis. In terms of biological role, carrier of the growing fatty acid chain in fatty acid biosynthesis. The sequence is that of Acyl carrier protein from Methylobacillus flagellatus (strain ATCC 51484 / DSM 6875 / VKM B-1610 / KT).